The primary structure comprises 235 residues: UPF0758 protein A1S_2918 (235 aa).

The segment at 1-20 (MNTSIKNWPEQERPRERLLQ) is disordered. Over residues 9-18 (PEQERPRERL) the composition is skewed to basic and acidic residues. The MPN domain occupies 105-227 (SLHSSHLVLD…SFSFAEQQLL (123 aa)). His-176, His-178, and Asp-189 together coordinate Zn(2+). The JAMM motif motif lies at 176-189 (HNHPFGSPQPSPED).

It belongs to the UPF0758 family.

This Acinetobacter baumannii (strain ATCC 17978 / DSM 105126 / CIP 53.77 / LMG 1025 / NCDC KC755 / 5377) protein is UPF0758 protein A1S_2918.